The sequence spans 276 residues: Undecaprenyl-diphosphatase (276 aa).

Helical transmembrane passes span 43 to 63 (RAMA…VWEF), 85 to 105 (LNLL…ADTI), 109 to 129 (LFNA…MLWA), 183 to 203 (AATE…AVYS), 218 to 238 (VFAI…RALL), and 254 to 274 (IAFG…WASA).

It belongs to the UppP family.

It localises to the cell inner membrane. The enzyme catalyses di-trans,octa-cis-undecaprenyl diphosphate + H2O = di-trans,octa-cis-undecaprenyl phosphate + phosphate + H(+). In terms of biological role, catalyzes the dephosphorylation of undecaprenyl diphosphate (UPP). Confers resistance to bacitracin. The polypeptide is Undecaprenyl-diphosphatase (Pseudomonas syringae pv. tomato (strain ATCC BAA-871 / DC3000)).